A 299-amino-acid polypeptide reads, in one-letter code: Probable phosphate butyryltransferase (299 aa).

Belongs to the phosphate acetyltransferase and butyryltransferase family.

The enzyme catalyses butanoyl-CoA + phosphate = butanoyl phosphate + CoA. Its function is as follows. Catalyzes the conversion of butyryl-CoA through butyryl phosphate to butyrate. The sequence is that of Probable phosphate butyryltransferase (yqiS) from Bacillus subtilis (strain 168).